A 297-amino-acid chain; its full sequence is MNQVDTRKETLEFNKLQKRLRRNVGNAITDYNMIEEGDVVMACISGGKDSFAMLDILLNLQKAAPIKFEVVAVNLDQKQPGFPEHILPDYFETLNIPYYIVDKDTYSVVKEKVPEGKTTCGLCSRLRRGTLYSFAEKIGATKLALGHHMDDIVETMFLNMFHGSRLKAMPPKLRSDDGRNVVIRPLTYCREKDLIKYAEHKEFPIIPCNLCGSQENLQRQSIKAMLIDWDKKTPGRVEAIFKSIQNVSPSQLADRELFDFENLPLDREGNREEYEFSEAVVSSTNIDESMFIDVTNI.

The short motif at 45–50 (SGGKDS) is the PP-loop motif element. [4Fe-4S] cluster-binding residues include Cys-120, Cys-123, and Cys-211.

It belongs to the TtcA family. As to quaternary structure, homodimer. The cofactor is Mg(2+). Requires [4Fe-4S] cluster as cofactor.

It localises to the cytoplasm. It catalyses the reaction cytidine(32) in tRNA + S-sulfanyl-L-cysteinyl-[cysteine desulfurase] + AH2 + ATP = 2-thiocytidine(32) in tRNA + L-cysteinyl-[cysteine desulfurase] + A + AMP + diphosphate + H(+). Its pathway is tRNA modification. Its function is as follows. Catalyzes the ATP-dependent 2-thiolation of cytidine in position 32 of tRNA, to form 2-thiocytidine (s(2)C32). The sulfur atoms are provided by the cysteine/cysteine desulfurase (IscS) system. This Vibrio campbellii (strain ATCC BAA-1116) protein is tRNA-cytidine(32) 2-sulfurtransferase.